Here is a 348-residue protein sequence, read N- to C-terminus: tRNA N6-adenosine threonylcarbamoyltransferase (348 aa).

2 residues coordinate Fe cation: histidine 111 and histidine 115. Substrate-binding positions include 134–138 (LVSGG), aspartate 167, glycine 180, aspartate 184, and asparagine 280. Aspartate 308 contributes to the Fe cation binding site.

The protein belongs to the KAE1 / TsaD family. Fe(2+) is required as a cofactor.

The protein localises to the cytoplasm. It catalyses the reaction L-threonylcarbamoyladenylate + adenosine(37) in tRNA = N(6)-L-threonylcarbamoyladenosine(37) in tRNA + AMP + H(+). Its function is as follows. Required for the formation of a threonylcarbamoyl group on adenosine at position 37 (t(6)A37) in tRNAs that read codons beginning with adenine. Is involved in the transfer of the threonylcarbamoyl moiety of threonylcarbamoyl-AMP (TC-AMP) to the N6 group of A37, together with TsaE and TsaB. TsaD likely plays a direct catalytic role in this reaction. This chain is tRNA N6-adenosine threonylcarbamoyltransferase, found in Rippkaea orientalis (strain PCC 8801 / RF-1) (Cyanothece sp. (strain PCC 8801)).